The primary structure comprises 297 residues: Oxidoreductase R1 (297 aa).

This sequence belongs to the asaB hydroxylase/desaturase family.

It participates in secondary metabolite biosynthesis. Functionally, oxidoreductase; part of the gene cluster that mediates the biosynthesis of squalestatin S1 (SQS1, also known as zaragozic acid A), a heavily oxidized fungal polyketide that offers potent cholesterol lowering activity by targeting squalene synthase (SS). SQS1 is composed of a 2,8-dioxobicyclic[3.2.1]octane-3,4,5-tricarboxyclic acid core that is connected to two lipophilic polyketide arms. These initial steps feature the priming of an unusual benzoic acid starter unit onto the highly reducing polyketide synthase pks2, followed by oxaloacetate extension and product release to generate a tricarboxylic acid containing product. The phenylalanine ammonia lyase (PAL) M7 and the acyl-CoA ligase M9 are involved in transforming phenylalanine into benzoyl-CoA. The citrate synthase-like protein R3 is involved in connecting the C-alpha-carbons of the hexaketide chain and oxaloacetate to afford the tricarboxylic acid unit. The potential hydrolytic enzymes, M8 and M10, are in close proximity to pks2 and may participate in product release. On the other side, the tetraketide arm is synthesized by a the squalestatin tetraketide synthase pks1 and enzymatically esterified to the core in the last biosynthetic step, by the acetyltransferase M4. The biosynthesis of the tetraketide must involve 3 rounds of chain extension. After the first and second rounds methyl-transfer occurs, and in all rounds of extension the ketoreductase and dehydratase are active. The enoyl reductase and C-MeT of pks1 are not active in the final round of extension. The acetyltransferase M4 appears to have a broad substrate selectivity for its acyl CoA substrate, allowing the in vitro synthesis of novel squalestatins. The biosynthesis of SQS1 requires several oxidative steps likely performed by oxidoreductases M1, R1 and R2. Finally, in support of the identification of the cluster as being responsible for SQS1 production, the cluster contains a gene encoding a putative squalene synthase (SS) R6, suggesting a likely mechanism for self-resistance. This is Oxidoreductase R1 from Phoma sp. (strain ATCC 20986 / MF5453).